The primary structure comprises 131 residues: Small ribosomal subunit protein uS11 (131 aa).

Residues Met-1–Arg-15 show a composition bias toward basic residues. The disordered stretch occupies residues Met-1–Ala-23.

It belongs to the universal ribosomal protein uS11 family. Part of the 30S ribosomal subunit. Interacts with proteins S7 and S18. Binds to IF-3.

Located on the platform of the 30S subunit, it bridges several disparate RNA helices of the 16S rRNA. Forms part of the Shine-Dalgarno cleft in the 70S ribosome. In Clostridium perfringens (strain 13 / Type A), this protein is Small ribosomal subunit protein uS11.